A 116-amino-acid polypeptide reads, in one-letter code: RutC family protein HI_1627 (116 aa).

The protein belongs to the RutC family.

This is RutC family protein HI_1627 from Haemophilus influenzae (strain ATCC 51907 / DSM 11121 / KW20 / Rd).